Reading from the N-terminus, the 100-residue chain is NADH-quinone oxidoreductase subunit K (100 aa).

The next 3 helical transmembrane spans lie at 4–24 (LSHA…AIIV), 29–49 (LFIL…FVIV), and 60–80 (IMYI…LALL).

Belongs to the complex I subunit 4L family. In terms of assembly, NDH-1 is composed of 13 different subunits. Subunits NuoA, H, J, K, L, M, N constitute the membrane sector of the complex.

It is found in the cell inner membrane. It catalyses the reaction a quinone + NADH + 5 H(+)(in) = a quinol + NAD(+) + 4 H(+)(out). NDH-1 shuttles electrons from NADH, via FMN and iron-sulfur (Fe-S) centers, to quinones in the respiratory chain. The immediate electron acceptor for the enzyme in this species is believed to be ubiquinone. Couples the redox reaction to proton translocation (for every two electrons transferred, four hydrogen ions are translocated across the cytoplasmic membrane), and thus conserves the redox energy in a proton gradient. This chain is NADH-quinone oxidoreductase subunit K, found in Blochmanniella pennsylvanica (strain BPEN).